A 302-amino-acid polypeptide reads, in one-letter code: Rhomboid-related protein 2 (302 aa).

The disordered stretch occupies residues 1-38 (MAVAHEMEMESVNLNMEREGKEEPEEEKMKGNGEGKDF). The span at 16–38 (MEREGKEEPEEEKMKGNGEGKDF) shows a compositional bias: basic and acidic residues. 7 helical membrane-spanning segments follow: residues 71–91 (PLFI…YAVW), 127–147 (LVHA…VLGI), 158–178 (VGLV…IFDP), 182–202 (LVGA…NVIV), 211–231 (FGIV…GFAL), 244–264 (VSFA…YTVF), and 277–297 (FWIA…FNIF). Catalysis depends on S186, which acts as the Nucleophile. H249 is an active-site residue.

Belongs to the peptidase S54 family. Proteolytic processing of the proenzyme produces an N- and a C-terminal fragment. The processing is required for activation of the protease.

Its subcellular location is the cell membrane. The enzyme catalyses Cleaves type-1 transmembrane domains using a catalytic dyad composed of serine and histidine that are contributed by different transmembrane domains.. Its function is as follows. Involved in regulated intramembrane proteolysis and the subsequent release of functional polypeptides from their membrane anchors. Known substrate: EFNB3. This is Rhomboid-related protein 2 (Rhbdl2) from Mus musculus (Mouse).